The chain runs to 497 residues: Mechanosensitive ion channel protein 1, mitochondrial (497 aa).

Residues 1-86 (MAGVRLSLLK…RAFSSKSDDF (86 aa)) constitute a mitochondrion transit peptide. Helical transmembrane passes span 152–172 (DVIV…VVMP), 216–236 (LVTF…TIAA), 238–258 (YFSP…LYRW), 280–300 (VLTL…MASA), and 305–325 (VAVQ…AFAA).

Belongs to the MscS (TC 1.A.23) family.

It localises to the mitochondrion membrane. In terms of biological role, mechanosensitive channel that opens in response to stretch forces in the membrane lipid bilayer. This Arabidopsis thaliana (Mouse-ear cress) protein is Mechanosensitive ion channel protein 1, mitochondrial (MSL1).